A 440-amino-acid polypeptide reads, in one-letter code: Cytochrome P450 monooygenase 1 (440 aa).

C381 is a binding site for heme.

This sequence belongs to the cytochrome P450 family. The cofactor is heme.

Its pathway is plant hormone biosynthesis; gibberellin biosynthesis. Its function is as follows. GA14 synthase; part of the gene cluster that mediates the biosynthesis of gibberellins (GAs), diterpenoids that may provide a selective advantage during infection of the preferred host plant, rice. Gibberellins (GAs) are diterpenoids and are synthesized via the mevalonate pathway. Biosynthesis of the major metabolite GA3 (gibberellic acid) from geranylgeranyl diphosphate (GGPP) requires 13 steps. The GGPP produced by the geranylgeranyl diphosphate synthase GGS2 is converted to ent-kaurene via ent-copalyldiphosphate in a two-step cyclization reaction performed by the bifunctional ent-copalyl diphosphate synthase/ent-kaurene synthase enzyme (CPS/KS). Ent-Kaurene is metabolized to GAs by a series of oxidation reactions catalyzed by cytochrome P450 monooxygenases. Cytochrome P450 monooxygenase P450-4 is an ent-kaurene oxidase that catalyzes the three oxidation steps between ent-kaurene and ent-kaurenoic acid. The highly multifunctional cytochrome P450 monooxygenase P450-1 then catalyzes four steps involving oxidation at two carbon atoms, in the main pathway from ent-kaurenoic acid to GA14 via GA12-aldehyde as well as producing kaurenolides and fujenoic acids as by-products. The cytochrome P450 monooxygenase P450-2 then converts GA14 to GA4 by removal of C-20. GA4 is further converted to GA7 by the GA4 desaturase DES via 1,2-desaturation before cytochrome P450 monooxygenase P450-3, a 13-hydroxylase, hydroxylates GA7 to GA3, the final product of the GA-biosynthetic pathway. This chain is Cytochrome P450 monooygenase 1, found in Gibberella fujikuroi (strain CBS 195.34 / IMI 58289 / NRRL A-6831) (Bakanae and foot rot disease fungus).